The primary structure comprises 117 residues: Large ribosomal subunit protein bL20 (117 aa).

This sequence belongs to the bacterial ribosomal protein bL20 family.

In terms of biological role, binds directly to 23S ribosomal RNA and is necessary for the in vitro assembly process of the 50S ribosomal subunit. It is not involved in the protein synthesizing functions of that subunit. In Magnetococcus marinus (strain ATCC BAA-1437 / JCM 17883 / MC-1), this protein is Large ribosomal subunit protein bL20.